The following is a 366-amino-acid chain: Chorismate synthase (366 aa).

NADP(+) contacts are provided by Arg48 and Arg54. Residues 132–134 (RSS), 244–245 (NA), Gly289, 304–308 (KPTSS), and Arg330 each bind FMN.

It belongs to the chorismate synthase family. As to quaternary structure, homotetramer. FMNH2 serves as cofactor.

The enzyme catalyses 5-O-(1-carboxyvinyl)-3-phosphoshikimate = chorismate + phosphate. Its pathway is metabolic intermediate biosynthesis; chorismate biosynthesis; chorismate from D-erythrose 4-phosphate and phosphoenolpyruvate: step 7/7. In terms of biological role, catalyzes the anti-1,4-elimination of the C-3 phosphate and the C-6 proR hydrogen from 5-enolpyruvylshikimate-3-phosphate (EPSP) to yield chorismate, which is the branch point compound that serves as the starting substrate for the three terminal pathways of aromatic amino acid biosynthesis. This reaction introduces a second double bond into the aromatic ring system. In Methylorubrum populi (strain ATCC BAA-705 / NCIMB 13946 / BJ001) (Methylobacterium populi), this protein is Chorismate synthase.